A 628-amino-acid polypeptide reads, in one-letter code: Dual specificity testis-specific protein kinase 1 (628 aa).

The segment at 1-35 (MAGERPPLRGPGPGETPVEGPGGAGGGPGRGRPSS) is disordered. The span at 20-30 (GPGGAGGGPGR) shows a compositional bias: gly residues. The Protein kinase domain occupies 52–310 (FDCAEKIGAG…EITQHLEQIL (259 aa)). ATP-binding positions include 58–66 (IGAGFFSEV) and Lys81. Asp170 functions as the Proton acceptor in the catalytic mechanism. Ser215 carries the post-translational modification Phosphoserine; by autocatalysis. Disordered regions lie at residues 330–376 (TYNQ…DNLT), 424–490 (PESL…QLPL), and 538–568 (RAQHSLPRAAALERTEPSPPPSAPREQEEGL). Position 338 is an omega-N-methylarginine (Arg338). Residues 348-357 (SDPRLSRSRS) are compositionally biased toward basic and acidic residues. The interval 421–526 (VASPESLVQP…NNNPPAVVVN (106 aa)) is required for interaction with YWHAB. At Ser439 the chain carries Phosphoserine. A compositionally biased stretch (pro residues) spans 478-487 (EPEPPGPAPQ). The required for interaction with PARVA stretch occupies residues 529–626 (QGWAREPWNR…PTPSLQLPGA (98 aa)). The tract at residues 529–628 (QGWAREPWNR…PSLQLPGARS (100 aa)) is required for interaction with SPRED1 and SPRY2. Required for TESK1-mediated dephosphorylation of SPRY2 and SPRY2 inhibition of ERK phosphorylation.

Belongs to the protein kinase superfamily. TKL Ser/Thr protein kinase family. Interacts (via both C- and N-termini) with SPRY4 (via C-terminus); the interaction inhibits TESK1 kinase activity. Interacts with TAOK1; the interaction inhibits TAOK1 kinase activity. Interacts (via C-terminus) with SPRED1 (via C-terminus); the interaction inhibits TESK1 kinase activity. Interacts (via C-terminus) with PARVA/PARVIN (via C-terminus); the interaction inhibits TESK1 kinase activity. Interacts with YWHAB/14-3-3 beta; the interaction is dependent on the phosphorylation of TESK1 Ser-439 and inhibits TESK1 kinase activity. Interacts with SPRY1, SPRY3 and SPRED2. Interacts (via C-terminus) with SPRY2 (via C-terminus); the interaction disrupts SPRY2 interaction with PPP2CA/PP2A-C, possibly by vesicular sequestration of SPRY2. Therefore dephosphorylation of SPRY2 by the serine/threonine-protein phosphatase 2A (PP2A) holoenzyme is lost, inhibiting its interaction with GRB2. Requires Mg(2+) as cofactor. Mn(2+) is required as a cofactor. In terms of processing, autophosphorylated on serine and tyrosine residues. Weakly expressed in sciatic nerves (at protein level). Highly expressed in testicular germ cells. Expressed at low levels in brain, lung, heart, liver and kidney.

The protein resides in the cytoplasm. It localises to the perinuclear region. The protein localises to the cytoskeleton. It is found in the microtubule organizing center. Its subcellular location is the centrosome. The protein resides in the cell projection. It localises to the lamellipodium. The enzyme catalyses L-seryl-[protein] + ATP = O-phospho-L-seryl-[protein] + ADP + H(+). It catalyses the reaction L-threonyl-[protein] + ATP = O-phospho-L-threonyl-[protein] + ADP + H(+). The catalysed reaction is L-tyrosyl-[protein] + ATP = O-phospho-L-tyrosyl-[protein] + ADP + H(+). With respect to regulation, activated by autophosphorylation on Ser-215. Kinase activity is inhibited by SPRED1. Functionally, dual specificity protein kinase activity catalyzing autophosphorylation and phosphorylation of exogenous substrates on both serine/threonine and tyrosine residues. Regulates the cellular cytoskeleton by enhancing actin stress fiber formation via phosphorylation of cofilin and by preventing microtubule breakdown via inhibition of TAOK1/MARKK kinase activity. Inhibits podocyte motility via regulation of actin cytoskeletal dynamics and phosphorylation of CFL1. Positively regulates integrin-mediated cell spreading, via phosphorylation of cofilin. Suppresses ciliogenesis via multiple pathways; phosphorylation of CFL1, suppression of ciliary vesicle directional trafficking to the ciliary base, and by facilitating YAP1 nuclear localization where it acts as a transcriptional corepressor of the TEAD4 target genes AURKA and PLK1. Probably plays a central role at and after the meiotic phase of spermatogenesis. This Rattus norvegicus (Rat) protein is Dual specificity testis-specific protein kinase 1 (Tesk1).